The following is a 95-amino-acid chain: UPF0473 protein GWCH70_2487 (95 aa).

This sequence belongs to the UPF0473 family.

The protein is UPF0473 protein GWCH70_2487 of Geobacillus sp. (strain WCH70).